Here is a 361-residue protein sequence, read N- to C-terminus: Chorismate synthase (361 aa).

Residues R48 and R54 each contribute to the NADP(+) site. Residues 125–127 (RSS), 238–239 (NA), G278, 293–297 (KPTSS), and R319 contribute to the FMN site.

This sequence belongs to the chorismate synthase family. Homotetramer. FMNH2 serves as cofactor.

It catalyses the reaction 5-O-(1-carboxyvinyl)-3-phosphoshikimate = chorismate + phosphate. Its pathway is metabolic intermediate biosynthesis; chorismate biosynthesis; chorismate from D-erythrose 4-phosphate and phosphoenolpyruvate: step 7/7. Functionally, catalyzes the anti-1,4-elimination of the C-3 phosphate and the C-6 proR hydrogen from 5-enolpyruvylshikimate-3-phosphate (EPSP) to yield chorismate, which is the branch point compound that serves as the starting substrate for the three terminal pathways of aromatic amino acid biosynthesis. This reaction introduces a second double bond into the aromatic ring system. The sequence is that of Chorismate synthase from Yersinia pseudotuberculosis serotype IB (strain PB1/+).